Here is a 289-residue protein sequence, read N- to C-terminus: MKLSFTKMHGAGNDFVVLDGYSRALPPLTEAQVRALANRHFGIGADQLLLVEKPTVDGADFKYRIFNCDGGEVEHCGNGARCFVKFVSDRGLTDKRSVRVQVMKGLITLTLQDNGEVVVDMGAPVFAPAQVPFDVSGLDGRAEGRDTLWPLDVGGATRWISAVSMGNPHAVQVVDDVEAYPVLEEGPLIERHARFPQRVNAGFMQIVSRHEVKLRVYERGAGETLACGTGACAAVAAGIRRGLLDSPVTVHTHGGTLTIGWDGARDEAAALMMAGPAATVFEGEIDLTA.

Positions 13, 47, and 67 each coordinate substrate. The active-site Proton donor is Cys76. Substrate-binding positions include 77-78 (GN), Asn167, Asn200, and 218-219 (ER). The Proton acceptor role is filled by Cys227. 228–229 (GT) serves as a coordination point for substrate.

The protein belongs to the diaminopimelate epimerase family. As to quaternary structure, homodimer.

Its subcellular location is the cytoplasm. The catalysed reaction is (2S,6S)-2,6-diaminopimelate = meso-2,6-diaminopimelate. The protein operates within amino-acid biosynthesis; L-lysine biosynthesis via DAP pathway; DL-2,6-diaminopimelate from LL-2,6-diaminopimelate: step 1/1. Functionally, catalyzes the stereoinversion of LL-2,6-diaminopimelate (L,L-DAP) to meso-diaminopimelate (meso-DAP), a precursor of L-lysine and an essential component of the bacterial peptidoglycan. In Burkholderia ambifaria (strain ATCC BAA-244 / DSM 16087 / CCUG 44356 / LMG 19182 / AMMD) (Burkholderia cepacia (strain AMMD)), this protein is Diaminopimelate epimerase.